Here is a 1558-residue protein sequence, read N- to C-terminus: Hybrid PKS-NRPS synthetase TAS1 (1558 aa).

The interval tyrosine 27–valine 392 is condensation (C) domain. Residues threonine 522–threonine 919 are adenylation (A) domain. Residues threonine 995–alanine 1028 are disordered. Residues serine 1027–glutamate 1104 form the Carrier domain. Residue serine 1063 is modified to O-(pantetheine 4'-phosphoryl)serine. Residues leucine 1116 to arginine 1144 are disordered. Residues glutamine 1131 to proline 1140 show a composition bias toward polar residues. Residues lysine 1145–serine 1558 form the Ketosynthase family 3 (KS3) domain. Catalysis depends on for beta-ketoacyl synthase activity residues cysteine 1308, histidine 1444, and asparagine 1484.

This sequence in the N-terminal section; belongs to the NRP synthetase family. Requires pantetheine 4'-phosphate as cofactor.

It catalyses the reaction acetoacetyl-CoA + L-isoleucine + ATP = tenuazonic acid + AMP + diphosphate + CoA + 2 H(+). Its function is as follows. Hybrid PKS-NRPS synthetase that mediates the biosynthesis of the toxin tenuazonic acid (TeA), an inhibitor of protein biosynthesis on ribosomes by suppressing the release of new protein. TAS1 alone is sufficient for TeA synthesis via the condensation of isoleucine (Ile) with acetoacetyl-CoA by the N-terminal NRPS module and subsequent cyclization conducted by the C-terminal KS domain. This chain is Hybrid PKS-NRPS synthetase TAS1, found in Gloeophyllum trabeum (strain ATCC 11539 / FP-39264 / Madison 617) (Brown rot fungus).